Here is an 81-residue protein sequence, read N- to C-terminus: Putative membrane protein insertion efficiency factor (81 aa).

Belongs to the UPF0161 family.

The protein localises to the cell inner membrane. In terms of biological role, could be involved in insertion of integral membrane proteins into the membrane. The protein is Putative membrane protein insertion efficiency factor of Thermotoga maritima (strain ATCC 43589 / DSM 3109 / JCM 10099 / NBRC 100826 / MSB8).